The following is a 393-amino-acid chain: Protein FAM47E (393 aa).

Positions 326–354 (VSHKAQEENFKKELQEQEELLADLHGTVA) form a coiled coil.

The protein belongs to the FAM47 family. As to quaternary structure, interacts with PRMT5; the interaction is direct. Interacts with WDR77.

It localises to the nucleus. The protein resides in the chromosome. Its subcellular location is the cytoplasm. Functionally, promotes histone methylation by localizing the arginine methyltransferase PRMT5 to chromatin. This chain is Protein FAM47E (FAM47E), found in Homo sapiens (Human).